Reading from the N-terminus, the 94-residue chain is Cystatin-A3 (94 aa).

The short motif at 46-50 (QLVNG) is the Secondary area of contact element.

Belongs to the cystatin family.

The protein localises to the cytoplasm. In terms of biological role, intracellular thiol proteinase inhibitor. The polypeptide is Cystatin-A3 (cpiC) (Dictyostelium discoideum (Social amoeba)).